A 494-amino-acid polypeptide reads, in one-letter code: Calmodulin-binding protein 60 A (494 aa).

A calmodulin-binding region spans residues 1-62; it reads MRIPTYDFGS…AGIKWICEKE (62 aa). The interval 132 to 252 is DNA-binding; sequence VSDWTDEDIR…AFHRRLNLSN (121 aa).

This sequence belongs to the plant ACBP60 protein family. As to quaternary structure, interacts with calmodulin (CaM). As to expression, expressed in stems, flowers and root.

It is found in the nucleus. Functionally, transcription activator that binds DNA in a sequence-specific manner, likely 5'-GAAATTTTGG-3', to promote the expression of target genes. This Arabidopsis thaliana (Mouse-ear cress) protein is Calmodulin-binding protein 60 A.